The following is a 451-amino-acid chain: Tubulin alpha-2 chain (451 aa).

Residue glutamine 11 participates in GTP binding. An N6-acetyllysine modification is found at lysine 40. Positions 71, 144, 145, 179, 206, and 228 each coordinate GTP. Glutamate 71 lines the Mg(2+) pocket. Residue glutamate 254 is part of the active site.

Belongs to the tubulin family. As to quaternary structure, dimer of alpha and beta chains. A typical microtubule is a hollow water-filled tube with an outer diameter of 25 nm and an inner diameter of 15 nM. Alpha-beta heterodimers associate head-to-tail to form protofilaments running lengthwise along the microtubule wall with the beta-tubulin subunit facing the microtubule plus end conferring a structural polarity. Microtubules usually have 13 protofilaments but different protofilament numbers can be found in some organisms and specialized cells. It depends on Mg(2+) as a cofactor. In terms of processing, undergoes a tyrosination/detyrosination cycle, the cyclic removal and re-addition of a C-terminal tyrosine residue by the enzymes tubulin tyrosine carboxypeptidase (TTCP) and tubulin tyrosine ligase (TTL), respectively.

Its subcellular location is the cytoplasm. It is found in the cytoskeleton. The enzyme catalyses GTP + H2O = GDP + phosphate + H(+). In terms of biological role, tubulin is the major constituent of microtubules, a cylinder consisting of laterally associated linear protofilaments composed of alpha- and beta-tubulin heterodimers. Microtubules grow by the addition of GTP-tubulin dimers to the microtubule end, where a stabilizing cap forms. Below the cap, tubulin dimers are in GDP-bound state, owing to GTPase activity of alpha-tubulin. The chain is Tubulin alpha-2 chain (TUBA2) from Chlamydomonas reinhardtii (Chlamydomonas smithii).